A 656-amino-acid chain; its full sequence is Putative cysteine-rich receptor-like protein kinase 32 (656 aa).

Positions 1 to 23 (MCLQNLLSILCFVLAISFGYVSA) are cleaved as a signal peptide. 2 Gnk2-homologous domains span residues 24-126 (QKCV…NSSF) and 134-238 (PTMV…GSEY). The Extracellular portion of the chain corresponds to 24–262 (QKCVDSMFFR…PDGKTISTGA (239 aa)). 5 N-linked (GlcNAc...) asparagine glycosylation sites follow: asparagine 35, asparagine 52, asparagine 61, asparagine 103, and asparagine 123. A helical membrane pass occupies residues 263-283 (IVAVVVSVVIFVVLLALVLVI). At 284–656 (RKRRQSYKTL…SASITRVTPR (373 aa)) the chain is on the cytoplasmic side. The region spanning 321 to 606 (FSRNNKLGKG…IFQMLTNSSI (286 aa)) is the Protein kinase domain. ATP-binding positions include 327-335 (LGKGGFGEV) and lysine 349. The residue at position 394 (tyrosine 394) is a Phosphotyrosine. Aspartate 454 serves as the catalytic Proton acceptor. Serine 458 carries the post-translational modification Phosphoserine. Threonine 494 bears the Phosphothreonine mark. A Phosphotyrosine modification is found at tyrosine 502.

The protein belongs to the protein kinase superfamily. Ser/Thr protein kinase family. CRK subfamily.

The protein resides in the membrane. It catalyses the reaction L-seryl-[protein] + ATP = O-phospho-L-seryl-[protein] + ADP + H(+). The enzyme catalyses L-threonyl-[protein] + ATP = O-phospho-L-threonyl-[protein] + ADP + H(+). The protein is Putative cysteine-rich receptor-like protein kinase 32 (CRK32) of Arabidopsis thaliana (Mouse-ear cress).